The chain runs to 185 residues: Protein TIFY 5 (185 aa).

Positions 38–72 (AAEARRNLTIFYNGRMCAVNVTELQARTIISMASQ) constitute a Tify domain. Residues 77–185 (KQQQQQIQGR…RAAAPLYARR (109 aa)) are disordered. Over residues 137-157 (PRAGLQAAAAAAPTMNQPPAA) the composition is skewed to low complexity. The Jas motif lies at 155 to 182 (PAASGLSMKRSLQRFLEKRKTRAAAPLY). A Nuclear localization signal motif is present at residues 162 to 169 (MKRSLQRF).

Belongs to the TIFY/JAZ family. Post-translationally, ubiquitinated. Targeted for degradation by the SCF(COI1) E3 ubiquitin ligase-proteasome pathway during jasmonate signaling.

The protein resides in the nucleus. Its function is as follows. Repressor of jasmonate responses. This Oryza sativa subsp. indica (Rice) protein is Protein TIFY 5.